An 804-amino-acid polypeptide reads, in one-letter code: Protein-lysine N-methyltransferase SMYD4 (804 aa).

S-adenosyl-L-methionine is bound at residue 112 to 114 (RSA). The SET domain maps to 233 to 574 (SSIGLCVDPL…KGQEILHCYG (342 aa)). Residues C296, C299, C309, C312, C318, C322, H331, and C335 each coordinate Zn(2+). The MYND-type zinc finger occupies 296–335 (CHRCLKHTLATVPCDGCSYAKYCSQECLQQAWELYHRTEC). S-adenosyl-L-methionine contacts are provided by residues N427, 539-540 (NH), Y573, and F595.

This sequence belongs to the class V-like SAM-binding methyltransferase superfamily. In terms of assembly, interacts (via MYND-type zinc finger) with HDAC1.

The protein resides in the nucleus. It is found in the cytoplasm. The enzyme catalyses L-lysyl-[protein] + S-adenosyl-L-methionine = N(6)-methyl-L-lysyl-[protein] + S-adenosyl-L-homocysteine + H(+). Its function is as follows. Protein-lysine N-methyltransferase. Monomethylates PRMT5, modulating its transcriptional activity. May also act as a histone methyltransferase. Plays a critical role in cardiac development. Acts as a key epigenetic regulator of gene expression during cardiac development via its dual activities as a methyltransferase and negative regulator of HDAC1. The sequence is that of Protein-lysine N-methyltransferase SMYD4 from Homo sapiens (Human).